A 454-amino-acid polypeptide reads, in one-letter code: Immediate-early protein ICP-46 homolog (454 aa).

A coiled-coil region spans residues 330 to 357 (EKDIETIEKYEKTIQELIVELHNLYLKR). The tract at residues 428-454 (SSPTASLSSLSPPSSNNNSPIRSPIRM) is disordered.

This sequence belongs to the IIV-6 393L family.

This chain is Immediate-early protein ICP-46 homolog, found in Invertebrate iridescent virus 6 (IIV-6).